Consider the following 409-residue polypeptide: Probable ATP-dependent RNA helicase MG308 homolog (409 aa).

Positions valine 26–valine 179 constitute a Helicase ATP-binding domain. Alanine 39–threonine 46 serves as a coordination point for ATP. Residues aspartate 126 to aspartate 129 carry the DEVD box motif. The 160-residue stretch at leucine 190–leucine 349 folds into the Helicase C-terminal domain.

It belongs to the DEAD box helicase family.

The catalysed reaction is ATP + H2O = ADP + phosphate + H(+). The protein is Probable ATP-dependent RNA helicase MG308 homolog of Mycoplasma pneumoniae (strain ATCC 29342 / M129 / Subtype 1) (Mycoplasmoides pneumoniae).